The chain runs to 761 residues: 5-methyltetrahydropteroyltriglutamate--homocysteine methyltransferase (761 aa).

Residues 16–19 and lysine 116 each bind 5-methyltetrahydropteroyltri-L-glutamate; that span reads RELK. L-homocysteine is bound by residues 435 to 437 and glutamate 488; that span reads IGS. Residues 435 to 437 and glutamate 488 each bind L-methionine; that span reads IGS. Residues 519 to 520 and tryptophan 565 contribute to the 5-methyltetrahydropteroyltri-L-glutamate site; that span reads RC. Residue aspartate 603 participates in L-homocysteine binding. Aspartate 603 serves as a coordination point for L-methionine. Glutamate 609 is a 5-methyltetrahydropteroyltri-L-glutamate binding site. Zn(2+)-binding residues include histidine 645, cysteine 647, and glutamate 669. The active-site Proton donor is histidine 698. Cysteine 730 serves as a coordination point for Zn(2+).

This sequence belongs to the vitamin-B12 independent methionine synthase family. It depends on Zn(2+) as a cofactor.

It carries out the reaction 5-methyltetrahydropteroyltri-L-glutamate + L-homocysteine = tetrahydropteroyltri-L-glutamate + L-methionine. The protein operates within amino-acid biosynthesis; L-methionine biosynthesis via de novo pathway; L-methionine from L-homocysteine (MetE route): step 1/1. Functionally, catalyzes the transfer of a methyl group from 5-methyltetrahydrofolate to homocysteine resulting in methionine formation. The protein is 5-methyltetrahydropteroyltriglutamate--homocysteine methyltransferase of Hahella chejuensis (strain KCTC 2396).